Consider the following 351-residue polypeptide: MRKIIHVDMDCFFAAVEMRDNPALRDIPIAIGGSRERRGVISTANYPARKFGVRSAMPTGMALKLCPHLTLLPGRFDAYKEASNHIREIFSRYTSRIEPLSLDEAYLDVTDSVHCHGSATLIAQEIRQTIFNELQLTASAGVAPVKFLAKIASDMNKPNGQFVITPAEVPAFLQTLPLAKIPGVGKVSAAKLEAMGLRTCGDVQKCDLVTLLKRFGKFGRILWERSQGIDERDVNSERLRKSVGVERTMAEDIHHWSECEAIIERLYPELERRLAKVKPDLLIARQGVKLKFDDFQQTTQEHVWPRLNKSDLIATARKTWDERRGGRGVRLVGLHVTLLDPQMERQLVLGL.

The UmuC domain maps to 4–185; the sequence is IIHVDMDCFF…LPLAKIPGVG (182 aa). 2 residues coordinate Mg(2+): D8 and D103. The active site involves E104.

The protein belongs to the DNA polymerase type-Y family. As to quaternary structure, monomer. Mg(2+) serves as cofactor.

It localises to the cytoplasm. It catalyses the reaction DNA(n) + a 2'-deoxyribonucleoside 5'-triphosphate = DNA(n+1) + diphosphate. Functionally, poorly processive, error-prone DNA polymerase involved in untargeted mutagenesis. Copies undamaged DNA at stalled replication forks, which arise in vivo from mismatched or misaligned primer ends. These misaligned primers can be extended by PolIV. Exhibits no 3'-5' exonuclease (proofreading) activity. May be involved in translesional synthesis, in conjunction with the beta clamp from PolIII. In Escherichia coli O1:K1 / APEC, this protein is DNA polymerase IV.